The sequence spans 503 residues: ATP synthase subunit beta (503 aa).

157–164 (GGAGVGKT) is an ATP binding site.

It belongs to the ATPase alpha/beta chains family. F-type ATPases have 2 components, CF(1) - the catalytic core - and CF(0) - the membrane proton channel. CF(1) has five subunits: alpha(3), beta(3), gamma(1), delta(1), epsilon(1). CF(0) has three main subunits: a(1), b(2) and c(9-12). The alpha and beta chains form an alternating ring which encloses part of the gamma chain. CF(1) is attached to CF(0) by a central stalk formed by the gamma and epsilon chains, while a peripheral stalk is formed by the delta and b chains.

It is found in the cell inner membrane. The enzyme catalyses ATP + H2O + 4 H(+)(in) = ADP + phosphate + 5 H(+)(out). Its function is as follows. Produces ATP from ADP in the presence of a proton gradient across the membrane. The catalytic sites are hosted primarily by the beta subunits. This chain is ATP synthase subunit beta, found in Flavobacterium psychrophilum (strain ATCC 49511 / DSM 21280 / CIP 103535 / JIP02/86).